The sequence spans 207 residues: NADH-quinone oxidoreductase subunit C (207 aa).

This sequence belongs to the complex I 30 kDa subunit family. As to quaternary structure, NDH-1 is composed of 14 different subunits. Subunits NuoB, C, D, E, F, and G constitute the peripheral sector of the complex.

The protein localises to the cell inner membrane. It carries out the reaction a quinone + NADH + 5 H(+)(in) = a quinol + NAD(+) + 4 H(+)(out). Its function is as follows. NDH-1 shuttles electrons from NADH, via FMN and iron-sulfur (Fe-S) centers, to quinones in the respiratory chain. The immediate electron acceptor for the enzyme in this species is believed to be ubiquinone. Couples the redox reaction to proton translocation (for every two electrons transferred, four hydrogen ions are translocated across the cytoplasmic membrane), and thus conserves the redox energy in a proton gradient. This is NADH-quinone oxidoreductase subunit C from Jannaschia sp. (strain CCS1).